Reading from the N-terminus, the 305-residue chain is Tyrosine recombinase XerC (305 aa).

The Core-binding (CB) domain occupies 1-93 (MVLDGFAAHF…SWRQYCVWLV (93 aa)). The region spanning 114–294 (RVPKALPQEW…DFDHIARLYD (181 aa)) is the Tyr recombinase domain. Residues R155, K179, H246, R249, and H272 contribute to the active site. Residue Y281 is the O-(3'-phospho-DNA)-tyrosine intermediate of the active site.

It belongs to the 'phage' integrase family. XerC subfamily. In terms of assembly, forms a cyclic heterotetrameric complex composed of two molecules of XerC and two molecules of XerD.

Its subcellular location is the cytoplasm. Its function is as follows. Site-specific tyrosine recombinase, which acts by catalyzing the cutting and rejoining of the recombining DNA molecules. The XerC-XerD complex is essential to convert dimers of the bacterial chromosome into monomers to permit their segregation at cell division. It also contributes to the segregational stability of plasmids. This chain is Tyrosine recombinase XerC, found in Neisseria meningitidis serogroup C (strain 053442).